A 654-amino-acid chain; its full sequence is MNIINLGILAHIDAGKTSVTENLLFASGATEKCGRVDNGDTITDSMDIEKRRGITVRASTTSIIWNGVKCNIIDTPGHMDFIAEVERTFKMLDGAVLILSAKEGIQAQTKLLFNTLQKLQIPTIIFINKIDRDGVNLERLYLDIKTNLSQDVLFMQTVVDGLVYPICSQTYIKEEYKEFVCNHDDNILERYLADSEISPADYWNTIIDLVAKAKVYPVLHGSAMFNIGINELLDAISSFILPPESVSNRLSAYLYKIEHDPKGHKRSFLKIIDGSLRLRDIVRINDSEKFIKIKNLKTIYQGRKINVDEVGANDIAIVEDMEDFRIGDYLGTKPCLIQGLSHQHPALKSSVRPDRSEERSKVISALNTLWIEDPSLSFSINSYSDELEISLYGLTQKEIIQTLLEERFSVKVHFDEIKTIYKERPVKKVNKIIQIEVPPNPYWATIGLTLEPLPLGTGLQIESDISYGYLNHSFQNAVFEGIRMSCQSGLHGWEVTDLKVTFTQAEYYSPVSTPADFRQLTPYVFRLALQQSGVDILEPMLYFELQIPQAASSKAITDLQKMMSEIEDISCNNEWCHIKGKVPYNTSKDYASEVSSYTKGLGVFMVKPCGYQITKGDYSDNIRMNEKDKILFMFQKSNVIKIMERSGNFYKAIQ.

In terms of domain architecture, tr-type G spans 1 to 244; sequence MNIINLGILA…AISSFILPPE (244 aa). Residues 10-17, 74-78, and 128-131 contribute to the GTP site; these read AHIDAGKT, DTPGH, and NKID.

Belongs to the TRAFAC class translation factor GTPase superfamily. Classic translation factor GTPase family. TetM/TetO subfamily.

In terms of biological role, abolishes the inhibitory effect of tetracyclin on protein synthesis by a non-covalent modification of the ribosomes. The sequence is that of Tetracycline resistance protein TetQ (tetQ) from Prevotella intermedia.